Here is a 97-residue protein sequence, read N- to C-terminus: UPF0235 protein LHK_03181 (97 aa).

The protein belongs to the UPF0235 family.

This is UPF0235 protein LHK_03181 from Laribacter hongkongensis (strain HLHK9).